A 421-amino-acid polypeptide reads, in one-letter code: Extracellular signal-regulated kinase 1 (421 aa).

The Protein kinase domain maps to 70–375 (YQILEIVGEG…VEDALKHPYL (306 aa)). ATP-binding positions include 76-84 (VGEGAYGIV) and lysine 99. Residue aspartate 194 is the Proton acceptor of the active site. Phosphothreonine is present on threonine 230. A TXY motif is present at residues 230 to 232 (TEY). Tyrosine 232 bears the Phosphotyrosine mark.

This sequence belongs to the protein kinase superfamily. CMGC Ser/Thr protein kinase family. MAP kinase subfamily. The cofactor is Mg(2+). Dually phosphorylated on Thr-230 and Tyr-232, which activates the enzyme.

It carries out the reaction L-seryl-[protein] + ATP = O-phospho-L-seryl-[protein] + ADP + H(+). The catalysed reaction is L-threonyl-[protein] + ATP = O-phospho-L-threonyl-[protein] + ADP + H(+). Its activity is regulated as follows. Activated by tyrosine and threonine phosphorylation. In Candida albicans (strain SC5314 / ATCC MYA-2876) (Yeast), this protein is Extracellular signal-regulated kinase 1 (CEK1).